The chain runs to 558 residues: Protein OS-9 homolog (558 aa).

Positions 1–17 (MLLKSLALIASSSLAAT) are cleaved as a signal peptide. An N-linked (GlcNAc...) asparagine glycan is attached at N68. Positions 111–237 (GDCLFYEQGF…QVGTPRLCKD (127 aa)) constitute an MRH domain. A disulfide bond links C113 and C126. A mannooligosaccharide derivative contacts are provided by Q133, R197, E219, and Y225. 2 disulfide bridges follow: C190–C223 and C205–C235. 2 disordered regions span residues 435–508 (SKKL…DEDE) and 539–558 (KDLA…GLSD). The segment covering 441 to 466 (KKEAASTKREEAKKQVEASVEEKAVD) has biased composition (basic and acidic residues). Over residues 474 to 492 (DTVTSTQTFFRTQTLSTAE) the composition is skewed to polar residues. Acidic residues predominate over residues 543-558 (DKEDDDDDYEDYGLSD).

Belongs to the OS-9 family. As to quaternary structure, interacts with missfolded ER lumenal proteins.

It is found in the endoplasmic reticulum membrane. Functionally, lectin involved in the quality control of the secretory pathway. As a member of the endoplasmic reticulum-associated degradation lumenal (ERAD-L) surveillance system, targets misfolded endoplasmic reticulum lumenal glycoproteins for degradation. This chain is Protein OS-9 homolog (YOS9), found in Yarrowia lipolytica (strain CLIB 122 / E 150) (Yeast).